A 187-amino-acid chain; its full sequence is Large ribosomal subunit protein uL5 (187 aa).

It belongs to the universal ribosomal protein uL5 family. Part of the 50S ribosomal subunit; part of the 5S rRNA/L5/L18/L25 subcomplex. Contacts the 5S rRNA and the P site tRNA. Forms a bridge to the 30S subunit in the 70S ribosome.

Its function is as follows. This is one of the proteins that bind and probably mediate the attachment of the 5S RNA into the large ribosomal subunit, where it forms part of the central protuberance. In the 70S ribosome it contacts protein S13 of the 30S subunit (bridge B1b), connecting the 2 subunits; this bridge is implicated in subunit movement. Contacts the P site tRNA; the 5S rRNA and some of its associated proteins might help stabilize positioning of ribosome-bound tRNAs. The chain is Large ribosomal subunit protein uL5 from Gluconobacter oxydans (strain 621H) (Gluconobacter suboxydans).